Consider the following 143-residue polypeptide: Hemoglobin subunit alpha-1 (143 aa).

Residue Ser2 is modified to N-acetylserine. The Globin domain occupies 2–143 (SLSSKDKATV…LALALAEKYR (142 aa)). Residue His60 coordinates O2. Position 89 (His89) interacts with heme b.

The protein belongs to the globin family. In terms of assembly, hb 1 is a heterotetramer of two alpha-1 and two beta-1 chains. As to expression, red blood cells.

Involved in oxygen transport from gills to the various peripheral tissues. The sequence is that of Hemoglobin subunit alpha-1 (hba1) from Arctogadus glacialis (Arctic cod).